Consider the following 235-residue polypeptide: Exosome complex component RRP46 (235 aa).

Positions 1–21 are disordered; sequence MEGAKRADANLLTDTGTESSP. Residues 12–21 show a composition bias toward polar residues; the sequence is LTDTGTESSP. Phosphoserine occurs at positions 20 and 23.

This sequence belongs to the RNase PH family. Homodimer. Component of the RNA exosome core complex (Exo-9), composed of EXOSC1, EXOSC2, EXOSC3, EXOSC4, EXOSC5, EXOSC6, EXOSC7, EXOSC8 and EXOSC9; within the complex interacts with EXOSC3, EXOSC8, and EXOSC9. The catalytically inactive RNA exosome core complex (Exo-9) associates with the catalytic subunit EXOSC10/RRP6. Exo-9 may associate with DIS3 to form the nucleolar exosome complex, or DIS3L to form the cytoplasmic exosome complex. Exo-9 is formed by a hexameric base ring consisting of the heterodimers EXOSC4-EXOSC9, EXOSC5-EXOSC8 and EXOSC6-EXOSC7, and a cap ring consisting of EXOSC1, EXOSC2 and EXOSC3. The RNA exosome complex associates with cofactors C1D/RRP47, MPHOSPH6/MPP6 and MTREX/MTR4. Interacts with GTPBP1. Interacts with ZC3HAV1. Interacts with DDX17 only in the presence of ZC3HAV1 in an RNA-independent manner.

Its subcellular location is the nucleus. It is found in the nucleolus. The protein localises to the cytoplasm. In terms of biological role, non-catalytic component of the RNA exosome complex which has 3'-&gt;5' exoribonuclease activity and participates in a multitude of cellular RNA processing and degradation events. In the nucleus, the RNA exosome complex is involved in proper maturation of stable RNA species such as rRNA, snRNA and snoRNA, in the elimination of RNA processing by-products and non-coding 'pervasive' transcripts, such as antisense RNA species and promoter-upstream transcripts (PROMPTs), and of mRNAs with processing defects, thereby limiting or excluding their export to the cytoplasm. The RNA exosome may be involved in Ig class switch recombination (CSR) and/or Ig variable region somatic hypermutation (SHM) by targeting AICDA deamination activity to transcribed dsDNA substrates. In the cytoplasm, the RNA exosome complex is involved in general mRNA turnover and specifically degrades inherently unstable mRNAs containing AU-rich elements (AREs) within their 3' untranslated regions, and in RNA surveillance pathways, preventing translation of aberrant mRNAs. It seems to be involved in degradation of histone mRNA. The catalytic inactive RNA exosome core complex of 9 subunits (Exo-9) is proposed to play a pivotal role in the binding and presentation of RNA for ribonucleolysis, and to serve as a scaffold for the association with catalytic subunits and accessory proteins or complexes. In vitro, EXOSC5 does not bind or digest single-stranded RNA and binds to double-stranded DNA without detectable DNase activity. The sequence is that of Exosome complex component RRP46 (Exosc5) from Mus musculus (Mouse).